The primary structure comprises 128 residues: Ribonuclease P protein component (128 aa).

It belongs to the RnpA family. In terms of assembly, consists of a catalytic RNA component (M1 or rnpB) and a protein subunit.

The enzyme catalyses Endonucleolytic cleavage of RNA, removing 5'-extranucleotides from tRNA precursor.. Functionally, RNaseP catalyzes the removal of the 5'-leader sequence from pre-tRNA to produce the mature 5'-terminus. It can also cleave other RNA substrates such as 4.5S RNA. The protein component plays an auxiliary but essential role in vivo by binding to the 5'-leader sequence and broadening the substrate specificity of the ribozyme. This is Ribonuclease P protein component from Prochlorococcus marinus (strain MIT 9303).